Reading from the N-terminus, the 398-residue chain is Transposase for insertion sequence element ISRM5 (398 aa).

It belongs to the transposase mutator family.

Its function is as follows. Required for the transposition of the insertion element. In Rhizobium meliloti (strain 1021) (Ensifer meliloti), this protein is Transposase for insertion sequence element ISRM5.